The following is a 709-amino-acid chain: Threonine--tRNA ligase, mitochondrial 1 (709 aa).

The N-terminal 21 residues, 1 to 21 (MLLRLTARSIRRFTTSSSSLP), are a transit peptide targeting the mitochondrion. In terms of domain architecture, TGS spans 73–135 (DPIKVTLPDG…EGDCKLELFK (63 aa)). Residues cysteine 407, histidine 458, and histidine 584 each contribute to the Zn(2+) site.

Belongs to the class-II aminoacyl-tRNA synthetase family.

It localises to the mitochondrion. It is found in the cytoplasm. Its subcellular location is the cytosol. It carries out the reaction tRNA(Thr) + L-threonine + ATP = L-threonyl-tRNA(Thr) + AMP + diphosphate + H(+). The polypeptide is Threonine--tRNA ligase, mitochondrial 1 (Arabidopsis thaliana (Mouse-ear cress)).